Here is a 104-residue protein sequence, read N- to C-terminus: Urease subunit beta (104 aa).

Belongs to the urease beta subunit family. In terms of assembly, heterotrimer of UreA (gamma), UreB (beta) and UreC (alpha) subunits. Three heterotrimers associate to form the active enzyme.

It is found in the cytoplasm. The catalysed reaction is urea + 2 H2O + H(+) = hydrogencarbonate + 2 NH4(+). It participates in nitrogen metabolism; urea degradation; CO(2) and NH(3) from urea (urease route): step 1/1. In Methylocella silvestris (strain DSM 15510 / CIP 108128 / LMG 27833 / NCIMB 13906 / BL2), this protein is Urease subunit beta.